Consider the following 176-residue polypeptide: Inorganic pyrophosphatase (176 aa).

3 residues coordinate substrate: K30, R44, and Y56. D66, D71, and D103 together coordinate Mg(2+). Y142 is a substrate binding site.

It belongs to the PPase family. In terms of assembly, homohexamer. Mg(2+) is required as a cofactor.

The protein resides in the cytoplasm. The catalysed reaction is diphosphate + H2O = 2 phosphate + H(+). Catalyzes the hydrolysis of inorganic pyrophosphate (PPi) forming two phosphate ions. The sequence is that of Inorganic pyrophosphatase from Vibrio parahaemolyticus serotype O3:K6 (strain RIMD 2210633).